A 150-amino-acid polypeptide reads, in one-letter code: Ribonuclease pancreatic (150 aa).

A signal peptide spans 1-26 (MALKSLVLLSLLVLVLLLVRVQPSLG). Residues lysine 27 and lysine 33 are each glycosylated (N-linked (Glc) (glycation) lysine; in vitro). Residues lysine 33 and arginine 36 each coordinate substrate. Histidine 38 serves as the catalytic Proton acceptor. Intrachain disulfides connect cysteine 52–cysteine 110, cysteine 66–cysteine 121, cysteine 84–cysteine 136, and cysteine 91–cysteine 98. Asparagine 60 is a glycosylation site (N-linked (GlcNAc...) asparagine; partial). 2 N-linked (Glc) (glycation) lysine; in vitro glycosylation sites follow: lysine 63 and lysine 67. Substrate-binding positions include 67-71 (KPVNT), lysine 92, and arginine 111. Histidine 145 serves as the catalytic Proton donor.

It belongs to the pancreatic ribonuclease family. In terms of assembly, interacts with and forms tight 1:1 complexes with RNH1. Dimerization of two such complexes may occur. Interaction with RNH1 inhibits this protein. Monomer. Pancreas.

It localises to the secreted. It carries out the reaction an [RNA] containing cytidine + H2O = an [RNA]-3'-cytidine-3'-phosphate + a 5'-hydroxy-ribonucleotide-3'-[RNA].. The enzyme catalyses an [RNA] containing uridine + H2O = an [RNA]-3'-uridine-3'-phosphate + a 5'-hydroxy-ribonucleotide-3'-[RNA].. Its function is as follows. Endonuclease that catalyzes the cleavage of RNA on the 3' side of pyrimidine nucleotides. Acts on single-stranded and double-stranded RNA. In Bos taurus (Bovine), this protein is Ribonuclease pancreatic (RNASE1).